Consider the following 580-residue polypeptide: Probable RNA-binding protein CG14230 (580 aa).

Residues Thr4–Glu81 enclose the RRM domain. Residues Arg89–Gly100 are compositionally biased toward basic and acidic residues. Disordered stretches follow at residues Arg89–Glu131 and Gln173–Ile211. Over residues Pro110–Gln120 the composition is skewed to polar residues. A Phosphoserine modification is found at Ser231. Composition is skewed to acidic residues over residues Glu254–Gln263 and Asn298–Glu313. Disordered regions lie at residues Glu254–Arg316, Ser333–Ser395, and Pro463–Asn520. Basic and acidic residues-rich tracts occupy residues Leu348 to Gln358 and Gln365 to Ser377. Residues Ala386–Ser395 show a composition bias toward polar residues. Position 468 is a phosphoserine (Ser468). Thr475 is modified (phosphothreonine).

The chain is Probable RNA-binding protein CG14230 from Drosophila melanogaster (Fruit fly).